Reading from the N-terminus, the 128-residue chain is Kinase-associated lipoprotein B (128 aa).

A signal peptide spans 1-25; the sequence is MSTFETGSIVKGFYKTGVYIGEITA. Cysteine 26 carries the N-palmitoyl cysteine lipid modification. A lipid anchor (S-diacylglycerol cysteine) is attached at cysteine 26.

The protein resides in the cell membrane. May play a role in the activation or the expression of KinB. In Bacillus subtilis (strain 168), this protein is Kinase-associated lipoprotein B (kapB).